The primary structure comprises 516 residues: MNLISKKNELKQGFYPLFFLEEFYIRVLIHMNHDHILKIGNIKQSKLIHVNRICHYLLIKRLIRQIRKQSHKYNGISEFPNYETEFYFQYKNRFYNLMIENVFLLILQTIWQHQKTRKNDPCILIHQSIQSAFPFLEKKIIHCIWIIHGNIQLFHTNQQFNFLFLLLYERIRDKSFLNLLKNIFNLKKELLIEGFYCDKFHLIELSMFLRNFYINEFDSFIVYHIVKTWKLAYLLNPSQAIDDFSFIQKNDILLNIKRKQKRLPLLCWLANKSFYSLYGNIHYVRRDLSFLMAIQAGKHISRFWKYNCIKFLQLKLGFPCSLDVLYLKSVFNQDFLFLGYRIVNKLWKKNFKIRAVSWYSPIIFFFKGRRISTKMPVFNLIHRLSVMHLCNLEGYPIHKAAWSVFNDKQIMNIFSNLLRNILLYYSGCSNRSDLGKIQYILEFSCMKTLAFKHKSSIRSTWTQYKKHVSFLSLVKNRHKNGKTSVDLYFLFQKTNKLWLLDLSKIQDSLACFLFID.

The protein belongs to the intron maturase 2 family. MatK subfamily.

It localises to the plastid. The protein localises to the chloroplast. Usually encoded in the trnK tRNA gene intron. Probably assists in splicing its own and other chloroplast group II introns. The sequence is that of Maturase K from Chara connivens (Convergent stonewort).